The primary structure comprises 199 residues: Recombination protein RecR (199 aa).

The C4-type zinc-finger motif lies at 57-72 (CQSCRTFTEETYCPIC). Residues 81–176 (EVICVVETPA…TVSRIAHGVP (96 aa)) enclose the Toprim domain.

It belongs to the RecR family.

In terms of biological role, may play a role in DNA repair. It seems to be involved in an RecBC-independent recombinational process of DNA repair. It may act with RecF and RecO. This chain is Recombination protein RecR, found in Shewanella pealeana (strain ATCC 700345 / ANG-SQ1).